The primary structure comprises 465 residues: UDP-N-acetylmuramate--L-alanine ligase (465 aa).

114–120 (GTHGKTT) is an ATP binding site.

Belongs to the MurCDEF family.

It localises to the cytoplasm. It carries out the reaction UDP-N-acetyl-alpha-D-muramate + L-alanine + ATP = UDP-N-acetyl-alpha-D-muramoyl-L-alanine + ADP + phosphate + H(+). Its pathway is cell wall biogenesis; peptidoglycan biosynthesis. Functionally, cell wall formation. In Chlorobium phaeobacteroides (strain BS1), this protein is UDP-N-acetylmuramate--L-alanine ligase.